A 242-amino-acid polypeptide reads, in one-letter code: tRNA1(Val) (adenine(37)-N6)-methyltransferase (242 aa).

This sequence belongs to the methyltransferase superfamily. tRNA (adenine-N(6)-)-methyltransferase family.

The protein localises to the cytoplasm. It carries out the reaction adenosine(37) in tRNA1(Val) + S-adenosyl-L-methionine = N(6)-methyladenosine(37) in tRNA1(Val) + S-adenosyl-L-homocysteine + H(+). Functionally, specifically methylates the adenine in position 37 of tRNA(1)(Val) (anticodon cmo5UAC). In Mannheimia succiniciproducens (strain KCTC 0769BP / MBEL55E), this protein is tRNA1(Val) (adenine(37)-N6)-methyltransferase.